A 471-amino-acid chain; its full sequence is MSQLLTARQAEELHKSMIAYLLSVNLSKSAAALREELADSVHLDDATAKKYEGLLEKKWTSVVRLQKKIMDLESRNAALQQELDSATPTSLSRRNQDPASWLPRAPARHSLQSHRGPVTCVAFHPIFSSLASGSEDTTIKIWDWELGELERTIKGHTRAVLDVDYGGPRGGTLLASCSSDLTIKLWDPSDEYKNIRTLPGHDHSVSAVRFIPSGAAGSPMSGNLLASASRDKTIRIWDVTTGYCVKTIQGHLDWVRDVFPSPDGRFLMSGGDDRVPRLLDASSGETKSTFIGHEHVVECVTIAPAASYPHLAALAGLKKPPPASSSAEFVATGSRDKTIKIWDSRGTLIKTLVGHDNWIRALVFHPGGKYLLSVSDDKTLRCWDLSQECKCVRTVSDAHGHFVSCIRWAPNIINESGLVSGEGGINGQGTPSMNGVSISTTSKKEDTGGGGKIRCVIATGSVDMNVRVFAS.

One can recognise a LisH domain in the interval 9–41 (QAEELHKSMIAYLLSVNLSKSAAALREELADSV). Residues 60-87 (TSVVRLQKKIMDLESRNAALQQELDSAT) adopt a coiled-coil conformation. Positions 83-93 (LDSATPTSLSR) are enriched in polar residues. Residues 83-108 (LDSATPTSLSRRNQDPASWLPRAPAR) are disordered. WD repeat units follow at residues 113–154 (SHRG…RTIK), 156–196 (HTRA…KNIR), 200–247 (GHDH…CVKT), 250–289 (GHLDWVRDVFPSPDGRFLMSGGDDRVPRLLDASSGETKST), 292–352 (GHEH…IKTL), 354–393 (GHDNWIRALVFHPGGKYLLSVSDDKTLRCWDLSQECKCVR), 398–428 (AHGHFVSCIRWAPNIINESGLVSGEGGINGQ), and 429–467 (GTPSMNGVSISTTSKKEDTGGGGKIRCVIATGSVDMNVR). The interval 424–449 (GINGQGTPSMNGVSISTTSKKEDTGG) is disordered. Positions 428–441 (QGTPSMNGVSISTT) are enriched in polar residues.

The protein belongs to the WD repeat LIS1/nudF family. As to quaternary structure, self-associates. Interacts with NDL1 and dynein.

It localises to the cytoplasm. The protein localises to the cytoskeleton. The protein resides in the spindle pole. Positively regulates the activity of the minus-end directed microtubule motor protein dynein. May enhance dynein-mediated microtubule sliding by targeting dynein to the microtubule plus end. Required for nuclear migration during vegetative growth as well as development. Required for retrograde early endosome (EE) transport from the hyphal tip. Required for localization of dynein to the mitotic spindle poles. Recruits additional proteins to the dynein complex at SPBs. The sequence is that of Nuclear distribution protein PAC1 from Coccidioides posadasii (strain C735) (Valley fever fungus).